The following is a 420-amino-acid chain: RING finger protein 39 (420 aa).

An RING-type zinc finger spans residues 88-135 (CPLCGGSFEDPVLLACEHSFCRACLARRWGTPPATGTEASPTACPCCG). Residues 210 to 420 (DDLPEDYPVV…APLRIVPAES (211 aa)) enclose the B30.2/SPRY domain. Residues 246–265 (DRRSVQLAPPGTPAPPDGPK) form a disordered region.

It is found in the cytoplasm. The enzyme catalyses S-ubiquitinyl-[E2 ubiquitin-conjugating enzyme]-L-cysteine + [acceptor protein]-L-lysine = [E2 ubiquitin-conjugating enzyme]-L-cysteine + N(6)-ubiquitinyl-[acceptor protein]-L-lysine.. It participates in protein modification; protein ubiquitination. Its function is as follows. Plays an inhibitory role in anti-RNA viral innate immunity by targeting the adapter DDX3X and promoting its 'Lys-48'-linked polyubiquitination. Alternatively, enhances the cGAS-STING pathway activation by promoting 'Lys-63'-linked ubiquitination of STING1, facilitating the STING1-TBK1 complex formation and STING1 activation. This is RING finger protein 39 (RNF39) from Pan troglodytes (Chimpanzee).